Consider the following 217-residue polypeptide: Mucosal pentraxin (217 aa).

Positions 1 to 19 are cleaved as a signal peptide; that stretch reads MEKLLLGVLLLAFLPEGMT. Residues 24–217 enclose the Pentraxin (PTX) domain; the sequence is RGKVFIFPEQ…KGYVVVKPKL (194 aa). The cysteines at positions 55 and 114 are disulfide-linked. Ca(2+)-binding residues include aspartate 77, asparagine 78, glutamate 155, glutamine 156, aspartate 157, and glutamine 167.

Belongs to the pentraxin family. As to quaternary structure, homopentamer. Pentraxin (or pentaxin) have a discoid arrangement of 5 non-covalently bound subunits. Requires Ca(2+) as cofactor.

Its subcellular location is the secreted. The polypeptide is Mucosal pentraxin (MPTX) (Bos taurus (Bovine)).